The sequence spans 111 residues: Nucleoid-associated protein CT0805 (111 aa).

The protein belongs to the YbaB/EbfC family. As to quaternary structure, homodimer.

The protein localises to the cytoplasm. Its subcellular location is the nucleoid. Its function is as follows. Binds to DNA and alters its conformation. May be involved in regulation of gene expression, nucleoid organization and DNA protection. The polypeptide is Nucleoid-associated protein CT0805 (Chlorobaculum tepidum (strain ATCC 49652 / DSM 12025 / NBRC 103806 / TLS) (Chlorobium tepidum)).